A 252-amino-acid polypeptide reads, in one-letter code: Imidazole glycerol phosphate synthase subunit HisF (252 aa).

Residues Asp11 and Asp130 contribute to the active site.

This sequence belongs to the HisA/HisF family. In terms of assembly, heterodimer of HisH and HisF.

Its subcellular location is the cytoplasm. It catalyses the reaction 5-[(5-phospho-1-deoxy-D-ribulos-1-ylimino)methylamino]-1-(5-phospho-beta-D-ribosyl)imidazole-4-carboxamide + L-glutamine = D-erythro-1-(imidazol-4-yl)glycerol 3-phosphate + 5-amino-1-(5-phospho-beta-D-ribosyl)imidazole-4-carboxamide + L-glutamate + H(+). Its pathway is amino-acid biosynthesis; L-histidine biosynthesis; L-histidine from 5-phospho-alpha-D-ribose 1-diphosphate: step 5/9. Functionally, IGPS catalyzes the conversion of PRFAR and glutamine to IGP, AICAR and glutamate. The HisF subunit catalyzes the cyclization activity that produces IGP and AICAR from PRFAR using the ammonia provided by the HisH subunit. The sequence is that of Imidazole glycerol phosphate synthase subunit HisF from Desulforamulus reducens (strain ATCC BAA-1160 / DSM 100696 / MI-1) (Desulfotomaculum reducens).